We begin with the raw amino-acid sequence, 139 residues long: ATP synthase epsilon chain (139 aa).

The protein belongs to the ATPase epsilon chain family. As to quaternary structure, F-type ATPases have 2 components, CF(1) - the catalytic core - and CF(0) - the membrane proton channel. CF(1) has five subunits: alpha(3), beta(3), gamma(1), delta(1), epsilon(1). CF(0) has three main subunits: a, b and c.

The protein resides in the cell inner membrane. Its function is as follows. Produces ATP from ADP in the presence of a proton gradient across the membrane. This is ATP synthase epsilon chain from Salmonella typhimurium (strain LT2 / SGSC1412 / ATCC 700720).